A 451-amino-acid chain; its full sequence is AP-4 complex subunit mu (451 aa).

One can recognise an MHD domain in the interval 184-450 (REEIFVDIIE…VTQANSYVAR (267 aa)).

This sequence belongs to the adaptor complexes medium subunit family. Adaptor protein complex 4 (AP-4) is a heterotetramer composed of two large adaptins (epsilon-type subunit and beta-type subunit), a medium adaptin (mu-type subunit) and a small adaptin (sigma-type subunit).

The protein resides in the golgi apparatus. Its subcellular location is the trans-Golgi network. It localises to the membrane. The protein localises to the coated pit. Subunit of novel type of clathrin- or non-clathrin-associated protein coat involved in targeting proteins from the trans-Golgi network (TGN) to the endosomal-lysosomal system. The sequence is that of AP-4 complex subunit mu (AP4M) from Arabidopsis thaliana (Mouse-ear cress).